The primary structure comprises 400 residues: Delta(12) fatty acid desaturase (400 aa).

Residues 91–111 form a helical membrane-spanning segment; it reads LAWPAYWIMQGIVCTGIWVLA. A Histidine box-1 motif is present at residues 112–116; sequence HECGH. The short motif at 148–152 is the Histidine box-2 element; sequence HSKHH. The next 3 helical transmembrane spans lie at 199–219, 245–265, and 277–297; these read IVTLFWMVIQFLFGWPAYLIM, FFDIIISDLGVLAALGALIYA, and YYIVPYLFVNFWLVLITFLQH. A Histidine box-3 motif is present at residues 339-343; that stretch reads HVAHH.

Belongs to the fatty acid desaturase type 1 family.

The protein localises to the membrane. The catalysed reaction is (9Z)-octadecenoyl-CoA + 2 Fe(II)-[cytochrome b5] + O2 + 2 H(+) = (9Z,12Z)-octadecadienoyl-CoA + 2 Fe(III)-[cytochrome b5] + 2 H2O. The enzyme catalyses (9Z)-hexadecenoyl-CoA + 2 Fe(II)-[cytochrome b5] + O2 + 2 H(+) = (9Z,12Z)-hexadecadienoyl-CoA + 2 Fe(III)-[cytochrome b5] + 2 H2O. Its pathway is lipid metabolism; polyunsaturated fatty acid biosynthesis. In terms of biological role, catalyzes the desaturation of oleic acid (Delta(9)-18:1) to linoleic acid (Delta(9), Delta(12)-18:2). This Mortierella alpina (Oleaginous fungus) protein is Delta(12) fatty acid desaturase.